Consider the following 567-residue polypeptide: DNA ligase B (567 aa).

The N6-AMP-lysine intermediate role is filled by Lys132.

The protein belongs to the NAD-dependent DNA ligase family. LigB subfamily.

It catalyses the reaction NAD(+) + (deoxyribonucleotide)n-3'-hydroxyl + 5'-phospho-(deoxyribonucleotide)m = (deoxyribonucleotide)n+m + AMP + beta-nicotinamide D-nucleotide.. In terms of biological role, catalyzes the formation of phosphodiester linkages between 5'-phosphoryl and 3'-hydroxyl groups in double-stranded DNA using NAD as a coenzyme and as the energy source for the reaction. The polypeptide is DNA ligase B (Yersinia pseudotuberculosis serotype O:1b (strain IP 31758)).